Here is a 270-residue protein sequence, read N- to C-terminus: 4-hydroxy-tetrahydrodipicolinate reductase (270 aa).

NAD(+)-binding positions include 11-16 (GAGGRM) and glutamate 37. Arginine 38 contacts NADP(+). NAD(+)-binding positions include 101 to 103 (GTT) and 125 to 128 (APNM). Residue histidine 158 is the Proton donor/acceptor of the active site. Residue histidine 159 coordinates (S)-2,3,4,5-tetrahydrodipicolinate. Lysine 162 (proton donor) is an active-site residue. A (S)-2,3,4,5-tetrahydrodipicolinate-binding site is contributed by 168–169 (GT).

The protein belongs to the DapB family.

The protein localises to the cytoplasm. It catalyses the reaction (S)-2,3,4,5-tetrahydrodipicolinate + NAD(+) + H2O = (2S,4S)-4-hydroxy-2,3,4,5-tetrahydrodipicolinate + NADH + H(+). The catalysed reaction is (S)-2,3,4,5-tetrahydrodipicolinate + NADP(+) + H2O = (2S,4S)-4-hydroxy-2,3,4,5-tetrahydrodipicolinate + NADPH + H(+). Its pathway is amino-acid biosynthesis; L-lysine biosynthesis via DAP pathway; (S)-tetrahydrodipicolinate from L-aspartate: step 4/4. Functionally, catalyzes the conversion of 4-hydroxy-tetrahydrodipicolinate (HTPA) to tetrahydrodipicolinate. The chain is 4-hydroxy-tetrahydrodipicolinate reductase from Shewanella sp. (strain ANA-3).